A 122-amino-acid polypeptide reads, in one-letter code: LYR motif-containing protein 1 (122 aa).

The protein belongs to the complex I LYR family.

This is LYR motif-containing protein 1 (lyrm1) from Xenopus laevis (African clawed frog).